Reading from the N-terminus, the 453-residue chain is Bifunctional protein GlmU (453 aa).

Positions 1–231 are pyrophosphorylase; that stretch reads MERTCLAVIL…EIEMTGCNTR (231 aa). UDP-N-acetyl-alpha-D-glucosamine contacts are provided by residues 10–13, Lys24, Gln77, 82–83, 105–107, Gly143, Glu157, Asn172, and Asn229; these read LAAG, GT, and YGD. Asp107 serves as a coordination point for Mg(2+). Asn229 lines the Mg(2+) pocket. The linker stretch occupies residues 232-252; it reads AELAVIERFWQERRRHQLMLS. Positions 253 to 453 are N-acetyltransferase; it reads GVTMIAPETV…ATKAAKKAKG (201 aa). Positions 318 and 336 each coordinate UDP-N-acetyl-alpha-D-glucosamine. His348 functions as the Proton acceptor in the catalytic mechanism. 2 residues coordinate UDP-N-acetyl-alpha-D-glucosamine: Tyr351 and Asn362. Residues Ala365, 371-372, Ser390, Ser408, and Arg425 contribute to the acetyl-CoA site; that span reads NY.

This sequence in the N-terminal section; belongs to the N-acetylglucosamine-1-phosphate uridyltransferase family. In the C-terminal section; belongs to the transferase hexapeptide repeat family. In terms of assembly, homotrimer. Requires Mg(2+) as cofactor.

The protein localises to the cytoplasm. The enzyme catalyses alpha-D-glucosamine 1-phosphate + acetyl-CoA = N-acetyl-alpha-D-glucosamine 1-phosphate + CoA + H(+). The catalysed reaction is N-acetyl-alpha-D-glucosamine 1-phosphate + UTP + H(+) = UDP-N-acetyl-alpha-D-glucosamine + diphosphate. It functions in the pathway nucleotide-sugar biosynthesis; UDP-N-acetyl-alpha-D-glucosamine biosynthesis; N-acetyl-alpha-D-glucosamine 1-phosphate from alpha-D-glucosamine 6-phosphate (route II): step 2/2. The protein operates within nucleotide-sugar biosynthesis; UDP-N-acetyl-alpha-D-glucosamine biosynthesis; UDP-N-acetyl-alpha-D-glucosamine from N-acetyl-alpha-D-glucosamine 1-phosphate: step 1/1. Its pathway is bacterial outer membrane biogenesis; LPS lipid A biosynthesis. Catalyzes the last two sequential reactions in the de novo biosynthetic pathway for UDP-N-acetylglucosamine (UDP-GlcNAc). The C-terminal domain catalyzes the transfer of acetyl group from acetyl coenzyme A to glucosamine-1-phosphate (GlcN-1-P) to produce N-acetylglucosamine-1-phosphate (GlcNAc-1-P), which is converted into UDP-GlcNAc by the transfer of uridine 5-monophosphate (from uridine 5-triphosphate), a reaction catalyzed by the N-terminal domain. This Rhizobium leguminosarum bv. trifolii (strain WSM2304) protein is Bifunctional protein GlmU.